A 356-amino-acid chain; its full sequence is Tetraacyldisaccharide 4'-kinase (356 aa).

67-74 (FVGGTGKT) is a binding site for ATP.

The protein belongs to the LpxK family.

It catalyses the reaction a lipid A disaccharide + ATP = a lipid IVA + ADP + H(+). The protein operates within glycolipid biosynthesis; lipid IV(A) biosynthesis; lipid IV(A) from (3R)-3-hydroxytetradecanoyl-[acyl-carrier-protein] and UDP-N-acetyl-alpha-D-glucosamine: step 6/6. Functionally, transfers the gamma-phosphate of ATP to the 4'-position of a tetraacyldisaccharide 1-phosphate intermediate (termed DS-1-P) to form tetraacyldisaccharide 1,4'-bis-phosphate (lipid IVA). The chain is Tetraacyldisaccharide 4'-kinase from Herminiimonas arsenicoxydans.